The chain runs to 632 residues: 1-deoxy-D-xylulose-5-phosphate synthase (632 aa).

Thiamine diphosphate-binding positions include His-87 and 128-130 (GHS). Asp-159 serves as a coordination point for Mg(2+). Residues 160 to 161 (GA), Asn-188, Phe-295, and Glu-378 each bind thiamine diphosphate. Asn-188 provides a ligand contact to Mg(2+).

The protein belongs to the transketolase family. DXPS subfamily. Homodimer. It depends on Mg(2+) as a cofactor. Thiamine diphosphate is required as a cofactor.

It catalyses the reaction D-glyceraldehyde 3-phosphate + pyruvate + H(+) = 1-deoxy-D-xylulose 5-phosphate + CO2. It functions in the pathway metabolic intermediate biosynthesis; 1-deoxy-D-xylulose 5-phosphate biosynthesis; 1-deoxy-D-xylulose 5-phosphate from D-glyceraldehyde 3-phosphate and pyruvate: step 1/1. Its function is as follows. Catalyzes the acyloin condensation reaction between C atoms 2 and 3 of pyruvate and glyceraldehyde 3-phosphate to yield 1-deoxy-D-xylulose-5-phosphate (DXP). This Pseudomonas fluorescens (strain SBW25) protein is 1-deoxy-D-xylulose-5-phosphate synthase.